The chain runs to 551 residues: Chaperonin GroEL (551 aa).

ATP contacts are provided by residues threonine 30 to proline 33, lysine 51, aspartate 87 to threonine 91, glycine 415, asparagine 479 to alanine 481, and aspartate 495.

It belongs to the chaperonin (HSP60) family. As to quaternary structure, forms a cylinder of 14 subunits composed of two heptameric rings stacked back-to-back. Interacts with the co-chaperonin GroES.

Its subcellular location is the cytoplasm. The enzyme catalyses ATP + H2O + a folded polypeptide = ADP + phosphate + an unfolded polypeptide.. In terms of biological role, together with its co-chaperonin GroES, plays an essential role in assisting protein folding. The GroEL-GroES system forms a nano-cage that allows encapsulation of the non-native substrate proteins and provides a physical environment optimized to promote and accelerate protein folding. This chain is Chaperonin GroEL, found in Acidithiobacillus ferrooxidans (strain ATCC 23270 / DSM 14882 / CIP 104768 / NCIMB 8455) (Ferrobacillus ferrooxidans (strain ATCC 23270)).